A 347-amino-acid polypeptide reads, in one-letter code: Magnesium-protoporphyrin IX monomethyl ester [oxidative] cyclase (347 aa).

It belongs to the AcsF family. It depends on Fe cation as a cofactor.

It catalyses the reaction Mg-protoporphyrin IX 13-monomethyl ester + 3 NADPH + 3 O2 + 2 H(+) = 3,8-divinyl protochlorophyllide a + 3 NADP(+) + 5 H2O. The protein operates within porphyrin-containing compound metabolism; chlorophyll biosynthesis (light-independent). Its function is as follows. Catalyzes the formation of the isocyclic ring in chlorophyll biosynthesis. Mediates the cyclase reaction, which results in the formation of divinylprotochlorophyllide (Pchlide) characteristic of all chlorophylls from magnesium-protoporphyrin IX 13-monomethyl ester (MgPMME). The polypeptide is Magnesium-protoporphyrin IX monomethyl ester [oxidative] cyclase (Prochlorococcus marinus (strain SARG / CCMP1375 / SS120)).